The sequence spans 604 residues: Linalool synthase Tps-5042L13, chloroplastic (604 aa).

A chloroplast-targeting transit peptide spans 1–34 (MSSMRIYVAIMKKPSVKHVDNVDKKASKPSWRVS). (2E)-geranyl diphosphate-binding residues include R323, D360, D364, R501, and D504. The Mg(2+) site is built by D360 and D364. Positions 360-364 (DDVYD) match the DDXXD motif motif. Mg(2+)-binding residues include D504, T508, and E512.

It belongs to the terpene synthase family. Tpsb subfamily. Monomer. Mg(2+) is required as a cofactor. It depends on Mn(2+) as a cofactor.

Its subcellular location is the plastid. The protein localises to the chloroplast. The enzyme catalyses (2E)-geranyl diphosphate + H2O = linalool + diphosphate. It functions in the pathway secondary metabolite biosynthesis; terpenoid biosynthesis. Functionally, monoterpene synthase (mono-TPS) involved in the biosynthesis of monoterpenes natural products. Catalyzes the conversion of (2E)-geranyl diphosphate (GPP) into linalool. This Perilla frutescens (Beefsteak mint) protein is Linalool synthase Tps-5042L13, chloroplastic.